Here is an 835-residue protein sequence, read N- to C-terminus: MWLLALCLVGLAGAQRGGGGPGGGAPGGPGLGLGSLGEERFPVVNTAYGRVRGVRRELNNEILGPVVQFLGVPYATPPLGARRFQPPEAPASWPGVRNATTLPPACPQNLHGALPAIMLPVWFTDNLEAAATYVQNQSEDCLYLNLYVPTEDGPLTKKRDEATLNPPDTDIRDPGKKPVMLFLHGGSYMEGTGNMFDGSVLAAYGNVIVATLNYRLGVLGFLSTGDQAAKGNYGLLDQIQALRWLSENIAHFGGDPERITIFGSGAGASCVNLLILSHHSEGLFQKAIAQSGTAISSWSVNYQPLKYTRLLAAKVGCDREDSAEAVECLRRKPSRELVDQDVQPARYHIAFGPVVDGDVVPDDPEILMQQGEFLNYDMLIGVNQGEGLKFVEDSAESEDGVSASAFDFTVSNFVDNLYGYPEGKDVLRETIKFMYTDWADRDNGEMRRKTLLALFTDHQWVAPAVATAKLHADYQSPVYFYTFYHHCQAEGRPEWADAAHGDELPYVFGVPMVGATDLFPCNFSKNDVMLSAVVMTYWTNFAKTGDPNQPVPQDTKFIHTKPNRFEEVVWSKFNSKEKQYLHIGLKPRVRDNYRANKVAFWLELVPHLHNLHTELFTTTTRLPPYATRWPPRPPAGAPGTRRPPPPATLPPEPEPEPGPRAYDRFPGDSRDYSTELSVTVAVGASLLFLNILAFAALYYKRDRRQELRCRRLSPPGGSGSGVPGGGPLLPAAGRELPPEEELVSLQLKRGGGVGADPAEALRPACPPDYTLALRRAPDDVPLLAPGALTLLPSGLGPPPPPPPPSLHPFGPFPPPPPTATSHNNTLPHPHSTTRV.

An N-terminal signal peptide occupies residues 1 to 14 (MWLLALCLVGLAGA). Residues 15–677 (QRGGGGPGGG…DSRDYSTELS (663 aa)) lie on the Extracellular side of the membrane. Asn-98 and Asn-136 each carry an N-linked (GlcNAc...) asparagine glycan. 3 disulfides stabilise this stretch: Cys-106-Cys-141, Cys-317-Cys-328, and Cys-487-Cys-521. Asn-522 carries an N-linked (GlcNAc...) asparagine glycan. Residues 623–668 (PPYATRWPPRPPAGAPGTRRPPPPATLPPEPEPEPGPRAYDRFPGD) form a disordered region. Over residues 630–658 (PPRPPAGAPGTRRPPPPATLPPEPEPEPG) the composition is skewed to pro residues. Residues 678–698 (VTVAVGASLLFLNILAFAALY) form a helical membrane-spanning segment. A required for interaction with LHFPL4 region spans residues 678-698 (VTVAVGASLLFLNILAFAALY). Topologically, residues 699–835 (YKRDRRQELR…LPHPHSTTRV (137 aa)) are cytoplasmic. 2 positions are modified to phosphoserine: Ser-713 and Ser-718. Residues 790 to 835 (LLPSGLGPPPPPPPPSLHPFGPFPPPPPTATSHNNTLPHPHSTTRV) form a disordered region. Residues 795 to 818 (LGPPPPPPPPSLHPFGPFPPPPPT) show a composition bias toward pro residues. Polar residues predominate over residues 823 to 835 (NNTLPHPHSTTRV).

Belongs to the type-B carboxylesterase/lipase family. As to quaternary structure, interacts with neurexins NRXN1, NRXN2 and NRXN3. Interaction with neurexins is mediated by heparan sulfate glycan modification on neurexin. Interacts (via its C-terminus) with DLG4/PSD-95 (via PDZ domain 3). Interacts with PATJ. Interacts with GPHN. Interacts with MDGA1 and MDGA2. Found in a complex with MAGI2 and IGSF9B, where it interacts with MAGI2 (via WW 1, WW 2 and PDZ 2 domains). Identified in a complex of 720 kDa composed of LHFPL4, NLGN2, GABRA1, GABRB2, GABRG2 and GABRB3. Interacts with LHFPL4; leading to mutual regulation of the protein level and synaptic clustering. Interacts with NLGN2. In terms of tissue distribution, expressed in the blood vessel walls. Detected in colon, brain and pancreas islets of Langerhans (at protein level). Detected in brain, and at lower levels in pancreas islet beta cells.

It is found in the cell membrane. The protein localises to the postsynaptic cell membrane. It localises to the presynaptic cell membrane. Its function is as follows. Transmembrane scaffolding protein involved in cell-cell interactions via its interactions with neurexin family members. Mediates cell-cell interactions both in neurons and in other types of cells, such as Langerhans beta cells. Plays a role in synapse function and synaptic signal transmission, especially via gamma-aminobutyric acid receptors (GABA(A) receptors). Functions by recruiting and clustering synaptic proteins. Promotes clustering of postsynaptic GABRG2 and GPHN. Promotes clustering of postsynaptic LHFPL4. Modulates signaling by inhibitory synapses, and thereby plays a role in controlling the ratio of signaling by excitatory and inhibitory synapses and information processing. Required for normal signal amplitude from inhibitory synapses, but is not essential for normal signal frequency. May promote the initial formation of synapses, but is not essential for this. In vitro, triggers the de novo formation of presynaptic structures. Mediates cell-cell interactions between Langerhans beta cells and modulates insulin secretion. The sequence is that of Neuroligin-2 (NLGN2) from Homo sapiens (Human).